A 312-amino-acid chain; its full sequence is MGKPLISILGPTGVGKTDLAFRLACSLDKANILSVDTGSFYKAATIGTAKPPKEFTSRVRHWFIDILECQEVYSVGAFVSDCSSILQDLWAEGVTPIVVAGTLFYYYALVGERSFSAVPSDSTVREKVEEKARVYGEEYLRQELRKVDPEREKNILPGDIRRLTRALEIAELGFKPTEAVVTNKLDFDINLKIGLKMPRDLYRTRLRDRVEYMISAGLIEEVQDILSKTGNSSLPCLNQIGYKEVCSYLKGEIKNKDELVERIFLSHWTYARKQIKWLKKDKTIVWFDVSEKSPDTLVEEVLTLVQSTLENC.

Residue 10-17 (GPTGVGKT) coordinates ATP. Residue 12 to 17 (TGVGKT) coordinates substrate.

The protein belongs to the IPP transferase family. As to quaternary structure, monomer. The cofactor is Mg(2+).

It catalyses the reaction adenosine(37) in tRNA + dimethylallyl diphosphate = N(6)-dimethylallyladenosine(37) in tRNA + diphosphate. Functionally, catalyzes the transfer of a dimethylallyl group onto the adenine at position 37 in tRNAs that read codons beginning with uridine, leading to the formation of N6-(dimethylallyl)adenosine (i(6)A). The polypeptide is tRNA dimethylallyltransferase (Coprothermobacter proteolyticus (strain ATCC 35245 / DSM 5265 / OCM 4 / BT)).